A 322-amino-acid polypeptide reads, in one-letter code: CXXC-type zinc finger protein 5 (322 aa).

A compositionally biased stretch (gly residues) spans 1–10 (MSSLGGGSQD). The segment at 1 to 100 (MSSLGGGSQD…SGGGSMMGGE (100 aa)) is disordered. Low complexity-rich tracts occupy residues 11-20 (AGGSSSSSTN) and 28-52 (SGPKAGAADKSAVVAAATPASVADD). T53 carries the post-translational modification Phosphothreonine. Gly residues predominate over residues 87-97 (SSGGSGGGSMM). The CXXC-type zinc-finger motif lies at 256–297 (GKKKRKRCGMCAPCRRRINCEQCSSCRNRKTGHQICKFRKCE). The Nuclear localization signal signature appears at 257 to 262 (KKKRKR). C263, C266, C269, C275, C278, C281, C291, and C296 together coordinate Zn(2+).

In terms of assembly, interacts with DVL1. Interacts with RBPJ.

The protein resides in the nucleus. Its subcellular location is the cytoplasm. May indirectly participate in activation of the NF-kappa-B and MAPK pathways. Acts as a mediator of BMP4-mediated modulation of canonical Wnt signaling activity in neural stem cells. Required for DNA damage-induced ATM phosphorylation, p53 activation and cell cycle arrest. Involved in myelopoiesis. Binds to the oxygen responsive element of COX4I2 and represses its transcription under hypoxia conditions (4% oxygen), as well as normoxia conditions (20% oxygen). May repress COX4I2 transactivation induced by CHCHD2 and RBPJ. Binds preferentially to DNA containing cytidine-phosphate-guanosine (CpG) dinucleotides over CpH (H=A, T, and C), hemimethylated-CpG and hemimethylated-hydroxymethyl-CpG. In Pongo abelii (Sumatran orangutan), this protein is CXXC-type zinc finger protein 5 (CXXC5).